The following is a 378-amino-acid chain: 3-dehydroquinate synthase (378 aa).

Residues 111-115, 135-136, Lys148, and Lys157 contribute to the NAD(+) site; these read GVIGD and TS. Zn(2+)-binding residues include Glu190, His252, and His271.

Belongs to the sugar phosphate cyclases superfamily. Dehydroquinate synthase family. The cofactor is NAD(+). Requires Co(2+) as cofactor. It depends on Zn(2+) as a cofactor.

It localises to the cytoplasm. The catalysed reaction is 7-phospho-2-dehydro-3-deoxy-D-arabino-heptonate = 3-dehydroquinate + phosphate. The protein operates within metabolic intermediate biosynthesis; chorismate biosynthesis; chorismate from D-erythrose 4-phosphate and phosphoenolpyruvate: step 2/7. In terms of biological role, catalyzes the conversion of 3-deoxy-D-arabino-heptulosonate 7-phosphate (DAHP) to dehydroquinate (DHQ). The protein is 3-dehydroquinate synthase of Mesorhizobium japonicum (strain LMG 29417 / CECT 9101 / MAFF 303099) (Mesorhizobium loti (strain MAFF 303099)).